Consider the following 195-residue polypeptide: Large ribosomal subunit protein uL5 (195 aa).

This sequence belongs to the universal ribosomal protein uL5 family. As to quaternary structure, part of the 50S ribosomal subunit; part of the 5S rRNA/L5/L18/L25 subcomplex. Contacts the 5S rRNA and the P site tRNA. Forms a bridge to the 30S subunit in the 70S ribosome.

Functionally, this is one of the proteins that bind and probably mediate the attachment of the 5S RNA into the large ribosomal subunit, where it forms part of the central protuberance. In the 70S ribosome it contacts protein S13 of the 30S subunit (bridge B1b), connecting the 2 subunits; this bridge is implicated in subunit movement. Contacts the P site tRNA; the 5S rRNA and some of its associated proteins might help stabilize positioning of ribosome-bound tRNAs. The sequence is that of Large ribosomal subunit protein uL5 from Leifsonia xyli subsp. xyli (strain CTCB07).